The chain runs to 182 residues: Small ribosomal subunit protein uS4c (182 aa).

The region spanning Met82–Asn143 is the S4 RNA-binding domain.

This sequence belongs to the universal ribosomal protein uS4 family. In terms of assembly, part of the 30S ribosomal subunit. Contacts protein S5. The interaction surface between S4 and S5 is involved in control of translational fidelity.

It localises to the plastid. The protein localises to the chloroplast. One of the primary rRNA binding proteins, it binds directly to 16S rRNA where it nucleates assembly of the body of the 30S subunit. In terms of biological role, with S5 and S12 plays an important role in translational accuracy. This Alophia veracruzana (Mexican pine woods lily) protein is Small ribosomal subunit protein uS4c (rps4).